We begin with the raw amino-acid sequence, 223 residues long: Golgi SNAP receptor complex member 1-1 (223 aa).

Residues 1 to 201 (MDVPSSWDAL…AAIKRKKSMD (201 aa)) are Cytoplasmic-facing. Residues 8–67 (DALRKQARKIEAQLDEQMHSYRRLVSTKALSKSDGNESDLEAGIDLLLRQLQQVNAQMQA) adopt a coiled-coil conformation. A helical; Anchor for type IV membrane protein membrane pass occupies residues 202–222 (TIILSLVAAVCTFLIFIYWIT). A topological domain (vesicular) is located at residue Lys223.

It belongs to the GOSR1 family. Component of several multiprotein Golgi SNARE complexes.

The protein localises to the golgi apparatus membrane. Its function is as follows. Involved in transport from the ER to the Golgi apparatus as well as in intra-Golgi transport. It belongs to a super-family of proteins called t-SNAREs or soluble NSF (N-ethylmaleimide-sensitive factor) attachment protein receptor. The chain is Golgi SNAP receptor complex member 1-1 (GOS11) from Arabidopsis thaliana (Mouse-ear cress).